A 457-amino-acid chain; its full sequence is Glutamate--tRNA ligase 2 (457 aa).

Residues 8–18 carry the 'HIGH' region motif; that stretch reads PSPTGYIHIGN. A 'KMSKS' region motif is present at residues 249–253; the sequence is GFSKR. Lys252 contributes to the ATP binding site.

The protein belongs to the class-I aminoacyl-tRNA synthetase family. Glutamate--tRNA ligase type 1 subfamily. As to quaternary structure, monomer.

It is found in the cytoplasm. The catalysed reaction is tRNA(Glu) + L-glutamate + ATP = L-glutamyl-tRNA(Glu) + AMP + diphosphate. In terms of biological role, catalyzes the attachment of glutamate to tRNA(Glu) in a two-step reaction: glutamate is first activated by ATP to form Glu-AMP and then transferred to the acceptor end of tRNA(Glu). This chain is Glutamate--tRNA ligase 2, found in Bartonella tribocorum (strain CIP 105476 / IBS 506).